The following is a 328-amino-acid chain: uncharacterized protein (328 aa).

The interval 296-328 (APEGDLEDEIIEVDPEQPRDDPYRRLRTPPPGG) is disordered. Residues 299–310 (GDLEDEIIEVDP) are compositionally biased toward acidic residues.

In terms of biological role, possibly necessary for replication. This is an uncharacterized protein from Halobacterium sp. (strain GN101).